A 364-amino-acid polypeptide reads, in one-letter code: Probable tartrate dehydrogenase/decarboxylase TtuC (364 aa).

Mn(2+) contacts are provided by aspartate 222, aspartate 246, and aspartate 250.

This sequence belongs to the isocitrate and isopropylmalate dehydrogenases family. Mg(2+) is required as a cofactor. The cofactor is Mn(2+). It depends on K(+) as a cofactor.

It is found in the cytoplasm. The enzyme catalyses tartrate + NAD(+) = 2-hydroxy-3-oxosuccinate + NADH + H(+). It catalyses the reaction (2R,3S)-tartrate + NAD(+) = 2-hydroxy-3-oxosuccinate + NADH + H(+). The catalysed reaction is (2R,3R)-tartrate + NAD(+) = 2-hydroxy-3-oxosuccinate + NADH + H(+). It carries out the reaction (2R,3R)-tartrate + H(+) = (R)-glycerate + CO2. The enzyme catalyses (R)-malate + NAD(+) = pyruvate + CO2 + NADH. The protein operates within carbohydrate acid metabolism; tartrate degradation; 2-hydroxy-3-oxosuccinate from L-tartrate: step 1/1. Its pathway is carbohydrate acid metabolism; tartrate degradation; 2-hydroxy-3-oxosuccinate from meso-tartrate: step 1/1. It participates in carbohydrate acid metabolism; tartrate degradation; D-glycerate from L-tartrate: step 1/1. Functionally, has multiple catalytic activities. Apart from catalyzing the oxidation of (+)-tartrate to oxaloglycolate, also converts meso-tartrate to D-glycerate and catalyzes the oxidative decarboxylation of D-malate to pyruvate. This Agrobacterium vitis (Rhizobium vitis) protein is Probable tartrate dehydrogenase/decarboxylase TtuC (ttuC).